The primary structure comprises 174 residues: uncharacterized protein (174 aa).

The interval 137–174 (TNVTLGDDTPKSYDAPVSAIPPPATATTANATGVKPLE) is disordered.

This is an uncharacterized protein from Acanthamoeba polyphaga (Amoeba).